Here is a 363-residue protein sequence, read N- to C-terminus: Phosphoserine aminotransferase (363 aa).

L-glutamate contacts are provided by serine 9 and arginine 42. Pyridoxal 5'-phosphate-binding positions include 76 to 77 (AR), tryptophan 102, threonine 154, aspartate 174, and glutamine 197. Lysine 198 is modified (N6-(pyridoxal phosphate)lysine). Residue 240 to 241 (NT) participates in pyridoxal 5'-phosphate binding.

Belongs to the class-V pyridoxal-phosphate-dependent aminotransferase family. SerC subfamily. As to quaternary structure, homodimer. Pyridoxal 5'-phosphate is required as a cofactor.

The protein localises to the cytoplasm. The enzyme catalyses O-phospho-L-serine + 2-oxoglutarate = 3-phosphooxypyruvate + L-glutamate. It carries out the reaction 4-(phosphooxy)-L-threonine + 2-oxoglutarate = (R)-3-hydroxy-2-oxo-4-phosphooxybutanoate + L-glutamate. Its pathway is amino-acid biosynthesis; L-serine biosynthesis; L-serine from 3-phospho-D-glycerate: step 2/3. It functions in the pathway cofactor biosynthesis; pyridoxine 5'-phosphate biosynthesis; pyridoxine 5'-phosphate from D-erythrose 4-phosphate: step 3/5. Functionally, catalyzes the reversible conversion of 3-phosphohydroxypyruvate to phosphoserine and of 3-hydroxy-2-oxo-4-phosphonooxybutanoate to phosphohydroxythreonine. The polypeptide is Phosphoserine aminotransferase (Baumannia cicadellinicola subsp. Homalodisca coagulata).